The following is an 886-amino-acid chain: Alanine--tRNA ligase (886 aa).

His-564, His-568, Cys-666, and His-670 together coordinate Zn(2+).

This sequence belongs to the class-II aminoacyl-tRNA synthetase family. Requires Zn(2+) as cofactor.

The protein localises to the cytoplasm. The catalysed reaction is tRNA(Ala) + L-alanine + ATP = L-alanyl-tRNA(Ala) + AMP + diphosphate. Its function is as follows. Catalyzes the attachment of alanine to tRNA(Ala) in a two-step reaction: alanine is first activated by ATP to form Ala-AMP and then transferred to the acceptor end of tRNA(Ala). Also edits incorrectly charged Ser-tRNA(Ala) and Gly-tRNA(Ala) via its editing domain. The protein is Alanine--tRNA ligase of Prochlorococcus marinus (strain AS9601).